Reading from the N-terminus, the 345-residue chain is Probable dual-specificity RNA methyltransferase RlmN (345 aa).

The Proton acceptor role is filled by glutamate 98. Residues 104-332 (TYKRLTVCVS…VSIRYSRGLE (229 aa)) form the Radical SAM core domain. A disulfide bond links cysteine 111 and cysteine 337. The [4Fe-4S] cluster site is built by cysteine 118, cysteine 122, and cysteine 125. Residues 165–166 (GE), serine 195, 218–220 (SLH), and asparagine 294 contribute to the S-adenosyl-L-methionine site. The active-site S-methylcysteine intermediate is cysteine 337.

It belongs to the radical SAM superfamily. RlmN family. The cofactor is [4Fe-4S] cluster.

The protein resides in the cytoplasm. The catalysed reaction is adenosine(2503) in 23S rRNA + 2 reduced [2Fe-2S]-[ferredoxin] + 2 S-adenosyl-L-methionine = 2-methyladenosine(2503) in 23S rRNA + 5'-deoxyadenosine + L-methionine + 2 oxidized [2Fe-2S]-[ferredoxin] + S-adenosyl-L-homocysteine. It catalyses the reaction adenosine(37) in tRNA + 2 reduced [2Fe-2S]-[ferredoxin] + 2 S-adenosyl-L-methionine = 2-methyladenosine(37) in tRNA + 5'-deoxyadenosine + L-methionine + 2 oxidized [2Fe-2S]-[ferredoxin] + S-adenosyl-L-homocysteine. Functionally, specifically methylates position 2 of adenine 2503 in 23S rRNA and position 2 of adenine 37 in tRNAs. This chain is Probable dual-specificity RNA methyltransferase RlmN, found in Trichodesmium erythraeum (strain IMS101).